The sequence spans 581 residues: Arginine--tRNA ligase (581 aa).

The short motif at 122 to 132 (PNVAKPMHVGH) is the 'HIGH' region element.

Belongs to the class-I aminoacyl-tRNA synthetase family. As to quaternary structure, monomer.

Its subcellular location is the cytoplasm. The catalysed reaction is tRNA(Arg) + L-arginine + ATP = L-arginyl-tRNA(Arg) + AMP + diphosphate. This is Arginine--tRNA ligase from Francisella tularensis subsp. tularensis (strain FSC 198).